A 24-amino-acid chain; its full sequence is Defensin D6 (24 aa).

It belongs to the DEFL family. Group IV subfamily. Distributed in the epidermal cell layer of leaves and in the subepidermal layer region of stems. Not in roots.

Its subcellular location is the secreted. It is found in the cell wall. Functionally, antimicrobial peptide. Active against Fusarium spp., Gram-positive and Gram-negative bacterial pathogens. The protein is Defensin D6 of Spinacia oleracea (Spinach).